The following is a 622-amino-acid chain: 1-deoxy-D-xylulose-5-phosphate synthase (622 aa).

Residues H80 and G121 to S123 contribute to the thiamine diphosphate site. Residue D152 participates in Mg(2+) binding. Thiamine diphosphate contacts are provided by residues G153–A154, N181, Y288, and E370. N181 provides a ligand contact to Mg(2+).

The protein belongs to the transketolase family. DXPS subfamily. Homodimer. Mg(2+) is required as a cofactor. Thiamine diphosphate serves as cofactor.

It carries out the reaction D-glyceraldehyde 3-phosphate + pyruvate + H(+) = 1-deoxy-D-xylulose 5-phosphate + CO2. It participates in metabolic intermediate biosynthesis; 1-deoxy-D-xylulose 5-phosphate biosynthesis; 1-deoxy-D-xylulose 5-phosphate from D-glyceraldehyde 3-phosphate and pyruvate: step 1/1. Catalyzes the acyloin condensation reaction between C atoms 2 and 3 of pyruvate and glyceraldehyde 3-phosphate to yield 1-deoxy-D-xylulose-5-phosphate (DXP). The polypeptide is 1-deoxy-D-xylulose-5-phosphate synthase (Shewanella sp. (strain MR-4)).